The following is a 237-amino-acid chain: 7-cyano-7-deazaguanine synthase (237 aa).

14-24 lines the ATP pocket; that stretch reads FSGGQDSATCL. Zn(2+) contacts are provided by cysteine 202, cysteine 217, cysteine 220, and cysteine 223.

It belongs to the QueC family. The cofactor is Zn(2+).

It carries out the reaction 7-carboxy-7-deazaguanine + NH4(+) + ATP = 7-cyano-7-deazaguanine + ADP + phosphate + H2O + H(+). It participates in purine metabolism; 7-cyano-7-deazaguanine biosynthesis. In terms of biological role, catalyzes the ATP-dependent conversion of 7-carboxy-7-deazaguanine (CDG) to 7-cyano-7-deazaguanine (preQ(0)). The sequence is that of 7-cyano-7-deazaguanine synthase from Rhodopseudomonas palustris (strain TIE-1).